Here is a 491-residue protein sequence, read N- to C-terminus: Delayed-rectifier potassium channel regulatory subunit KCNS3 (491 aa).

Residues 1-182 (MVFGEFFHRP…IRMENPAYCL (182 aa)) are Cytoplasmic-facing. A helical membrane pass occupies residues 183–204 (SAKLIAISSLSVVLASIVAMCV). At 205-220 (HSMSEFQNEDGEVDDP) the chain is on the extracellular side. A helical transmembrane segment spans residues 221–243 (VLEGVEIACIAWFTGELAVRLAA). The Cytoplasmic portion of the chain corresponds to 244 to 254 (APCQKKFWKNP). The chain crosses the membrane as a helical span at residues 255–275 (LNIIDFVSIIPFYATLAVDTK). Over 276–285 (EEESEDIENM) the chain is Extracellular. Residues 286–306 (GKVVQILRLMRIFRILKLARH) form a helical; Voltage-sensor membrane-spanning segment. Residues 307–321 (SVGLRSLGATLRHSY) lie on the Cytoplasmic side of the membrane. Residues 322-343 (HEVGLLLLFLSVGISIFSVLIY) traverse the membrane as a helical segment. The Extracellular segment spans residues 344–357 (SVEKDDHTSSLTSI). The helical intramembrane region spans 358–369 (PICWWWATISMT). Positions 370-375 (TVGYGD) match the Selectivity filter motif. The stretch at 370–377 (TVGYGDTH) is an intramembrane region. Topologically, residues 378–384 (PVTLAGK) are extracellular. A helical membrane pass occupies residues 385 to 413 (LIASTCIICGILVVALPITIIFNKFSKYY). Residues 414-491 (QKQKDIDVDQ…TTSLENCTAK (78 aa)) are Cytoplasmic-facing.

The protein belongs to the potassium channel family. S (TC 1.A.1.2) subfamily. Kv9.3/KCNS3 sub-subfamily. Heterotetramer with KCNB1. Does not form homomultimers. As to expression, detected in whole normal term placental and placental chorionic plate arteries and veins. Detected in syncytiotrophoblast and in blood vessel endothelium within intermediate villi and chorionic plate (at protein level). Detected in most tissues, but not in peripheral blood lymphocytes. The highest levels of expression are in lung.

The protein localises to the cell membrane. Functionally, potassium channel regulatory subunit that modulates the delayed rectifier potassium channel activity of KCNB1 by namely slowing down the deactivation and inactivation time constants. While it does not form functional channel on its own, it can form functional heterotetrameric channels with KCNB1. This Homo sapiens (Human) protein is Delayed-rectifier potassium channel regulatory subunit KCNS3.